The following is a 295-amino-acid chain: 33 kDa chaperonin (295 aa).

Disulfide bonds link Cys-237–Cys-239 and Cys-270–Cys-273.

This sequence belongs to the HSP33 family. Post-translationally, under oxidizing conditions two disulfide bonds are formed involving the reactive cysteines. Under reducing conditions zinc is bound to the reactive cysteines and the protein is inactive.

It is found in the cytoplasm. Functionally, redox regulated molecular chaperone. Protects both thermally unfolding and oxidatively damaged proteins from irreversible aggregation. Plays an important role in the bacterial defense system toward oxidative stress. The protein is 33 kDa chaperonin of Lactiplantibacillus plantarum (strain ATCC BAA-793 / NCIMB 8826 / WCFS1) (Lactobacillus plantarum).